The chain runs to 292 residues: F-box/LRR-repeat protein 15 (292 aa).

In terms of domain architecture, F-box spans 12 to 59; that stretch reads LLDLPWEDVLVPHILSYLPLRHILSLQRVSKPFHSLVHIYLCNCRHFD. LRR repeat units lie at residues 134–155, 160–181, 186–207, 212–233, and 238–259; these read HLQN…RSLA, CLEA…SYLV, RLKS…EETA, DLEH…RTLA, and NLKS…GNLR.

The protein belongs to the FBXL15 family. In terms of assembly, part of the SCF (SKP1-CUL1-F-box) E3 ubiquitin-protein ligase complex SCF(FBXL15).

The protein resides in the cytoplasm. Its pathway is protein modification; protein ubiquitination. In terms of biological role, substrate recognition component of a SCF (SKP1-CUL1-F-box protein) E3 ubiquitin-protein ligase complex which mediates the ubiquitination and subsequent proteasomal degradation of target proteins. Acts as a positive regulator of the BMP signaling pathway. Required for dorsal/ventral pattern formation. The sequence is that of F-box/LRR-repeat protein 15 (fbxl15) from Xenopus laevis (African clawed frog).